The following is a 138-amino-acid chain: Cytosolic calcium-binding protein 2 (138 aa).

Low complexity predominate over residues 31-41 (TEVTQQPEESV). Residues 31 to 122 (TEVTQQPEES…KKTEVVEEKQ (92 aa)) form a disordered region. Repeat copies occupy residues 62–68 (VEEAEKK), 71–75 (ETEKK), 92–98 (VEEEEKK), 109–114 (VEEEKK), 118–122 (VEEKQ), and 131–135 (VAVEK). Residues 62-135 (VEEAEKKDEE…AAAEEVAVEK (74 aa)) are 6 X 5 AA approximate repeats of V-E-E-K-K. A compositionally biased stretch (basic and acidic residues) spans 64–85 (EAEKKDEETEKKTEEKDEKTEV). Residues 110–122 (EEEKKTEVVEEKQ) show a composition bias toward basic and acidic residues.

Predominantly expressed in roots (e.g. in endodermis in the stele) and stems, to a lower extent in shoots, flowers and siliques, and, at low levels, in leaves.

The protein localises to the cytoplasm. Its subcellular location is the cytosol. Functionally, binds calcium Ca(2+) and may act as a signal mediator to buffer Ca(2+). The chain is Cytosolic calcium-binding protein 2 from Arabidopsis thaliana (Mouse-ear cress).